A 179-amino-acid polypeptide reads, in one-letter code: Protein HEADING DATE 3A (179 aa).

The protein belongs to the phosphatidylethanolamine-binding protein family. As to expression, expressed in the inner region of the SAM, stem and leaf blade vascular tissues (at protein level).

Its subcellular location is the cytoplasm. It localises to the nucleus. In terms of biological role, probable mobile flower-promoting signal (florigen) that moves from the leaf to the shoot apical meristem (SAM) and induces flowering. Promotes the transition from vegetative growth to flowering downstream of HD1 and EHD1 under short day (SD) conditions. Acts upstream of MADS14 and MADS15. The polypeptide is Protein HEADING DATE 3A (HD3A) (Oryza sativa subsp. japonica (Rice)).